Consider the following 368-residue polypeptide: UPF0284 protein SYNPCC7002_A1742 (368 aa).

This sequence belongs to the UPF0284 family.

The protein is UPF0284 protein SYNPCC7002_A1742 of Picosynechococcus sp. (strain ATCC 27264 / PCC 7002 / PR-6) (Agmenellum quadruplicatum).